The sequence spans 185 residues: Lactoylglutathione lyase (185 aa).

The tract at residues 1 to 21 (MAAEPKESPSNNPGLHTTPDE) is disordered. The 148-residue stretch at 27 to 174 (IMQQTMFRIK…DGYWIEIFDR (148 aa)) folds into the VOC domain. 2 residues coordinate substrate: Gln-30 and Arg-34. Residue Gln-30 participates in Zn(2+) binding. Glu-96 provides a ligand contact to Zn(2+). Residues Asn-100, Arg-120, His-124, and 154-155 (KM) each bind substrate. His-124 contacts Zn(2+). Zn(2+) is bound at residue Glu-170. Glu-170 functions as the Proton donor/acceptor in the catalytic mechanism.

This sequence belongs to the glyoxalase I family. In terms of assembly, homodimer. Zn(2+) is required as a cofactor.

The catalysed reaction is (R)-S-lactoylglutathione = methylglyoxal + glutathione. It participates in secondary metabolite metabolism; methylglyoxal degradation; (R)-lactate from methylglyoxal: step 1/2. Its function is as follows. Catalyzes the conversion of hemimercaptal, formed from methylglyoxal and glutathione, to S-lactoylglutathione. Active toward the hemithioacetal adducts formed by reacting methylglyoxal or phenylglyoxal with glutathione, homoglutathione or gamma-glutamylcysteine, showing no preference for homoglutathione adducts over glutathione adducts. The protein is Lactoylglutathione lyase (GLXI) of Glycine max (Soybean).